The primary structure comprises 237 residues: Aliphatic sulfonates import ATP-binding protein SsuB 1 (237 aa).

Residues 5–221 (LMDIRVEHKA…PRDRRDPLLA (217 aa)) form the ABC transporter domain. 38-45 (GPSGCGKS) lines the ATP pocket.

The protein belongs to the ABC transporter superfamily. Aliphatic sulfonates importer (TC 3.A.1.17.2) family. The complex is composed of two ATP-binding proteins (SsuB), two transmembrane proteins (SsuC) and a solute-binding protein (SsuA).

Its subcellular location is the cell inner membrane. It catalyses the reaction ATP + H2O + aliphatic sulfonate-[sulfonate-binding protein]Side 1 = ADP + phosphate + aliphatic sulfonateSide 2 + [sulfonate-binding protein]Side 1.. Its function is as follows. Part of the ABC transporter complex SsuABC involved in aliphatic sulfonates import. Responsible for energy coupling to the transport system. This Pseudomonas syringae pv. syringae (strain B728a) protein is Aliphatic sulfonates import ATP-binding protein SsuB 1.